Reading from the N-terminus, the 315-residue chain is Aspartate carbamoyltransferase catalytic subunit (315 aa).

R64 and T65 together coordinate carbamoyl phosphate. K92 is an L-aspartate binding site. Positions 114, 142, and 145 each coordinate carbamoyl phosphate. 2 residues coordinate L-aspartate: R175 and R229. Carbamoyl phosphate is bound by residues G270 and P271.

The protein belongs to the aspartate/ornithine carbamoyltransferase superfamily. ATCase family. Heterododecamer (2C3:3R2) of six catalytic PyrB chains organized as two trimers (C3), and six regulatory PyrI chains organized as three dimers (R2).

It carries out the reaction carbamoyl phosphate + L-aspartate = N-carbamoyl-L-aspartate + phosphate + H(+). It participates in pyrimidine metabolism; UMP biosynthesis via de novo pathway; (S)-dihydroorotate from bicarbonate: step 2/3. Catalyzes the condensation of carbamoyl phosphate and aspartate to form carbamoyl aspartate and inorganic phosphate, the committed step in the de novo pyrimidine nucleotide biosynthesis pathway. This is Aspartate carbamoyltransferase catalytic subunit from Bradyrhizobium diazoefficiens (strain JCM 10833 / BCRC 13528 / IAM 13628 / NBRC 14792 / USDA 110).